The following is a 155-amino-acid chain: Small ribosomal subunit protein uS9 (155 aa).

It belongs to the universal ribosomal protein uS9 family.

This Rhizobium meliloti (strain 1021) (Ensifer meliloti) protein is Small ribosomal subunit protein uS9.